A 400-amino-acid chain; its full sequence is Elongation factor Tu (400 aa).

Positions 10 to 210 constitute a tr-type G domain; the sequence is KPHINVGTIG…ALDEYIPEPK (201 aa). Residues 19–26 are G1; sequence GHVDHGKT. 19–26 contributes to the GTP binding site; that stretch reads GHVDHGKT. Thr26 is a binding site for Mg(2+). The G2 stretch occupies residues 64 to 68; that stretch reads GITIA. Residues 85–88 are G3; the sequence is DCPG. GTP is bound by residues 85-89 and 140-143; these read DCPGH and NKAD. Residues 140 to 143 are G4; sequence NKAD. Residues 178 to 180 are G5; the sequence is SAL.

The protein belongs to the TRAFAC class translation factor GTPase superfamily. Classic translation factor GTPase family. EF-Tu/EF-1A subfamily. As to quaternary structure, monomer.

It localises to the cytoplasm. It carries out the reaction GTP + H2O = GDP + phosphate + H(+). In terms of biological role, GTP hydrolase that promotes the GTP-dependent binding of aminoacyl-tRNA to the A-site of ribosomes during protein biosynthesis. The protein is Elongation factor Tu of Rubrobacter xylanophilus (strain DSM 9941 / JCM 11954 / NBRC 16129 / PRD-1).